Reading from the N-terminus, the 125-residue chain is Dirigent protein 22 (125 aa).

3 N-linked (GlcNAc...) asparagine glycosylation sites follow: N8, N30, and N65.

This sequence belongs to the plant dirigent protein family. As to quaternary structure, homodimer.

It is found in the secreted. The protein localises to the extracellular space. It localises to the apoplast. Functionally, dirigent proteins impart stereoselectivity on the phenoxy radical-coupling reaction, yielding optically active lignans from two molecules of coniferyl alcohol in the biosynthesis of lignans, flavonolignans, and alkaloids and thus plays a central role in plant secondary metabolism. The protein is Dirigent protein 22 (DIR22) of Arabidopsis thaliana (Mouse-ear cress).